The primary structure comprises 277 residues: Hydroxyethylthiazole kinase (277 aa).

Residue Met55 participates in substrate binding. Residues Arg130 and Ser176 each coordinate ATP. Residue Gly203 coordinates substrate.

It belongs to the Thz kinase family. Requires Mg(2+) as cofactor.

It carries out the reaction 5-(2-hydroxyethyl)-4-methylthiazole + ATP = 4-methyl-5-(2-phosphooxyethyl)-thiazole + ADP + H(+). It participates in cofactor biosynthesis; thiamine diphosphate biosynthesis; 4-methyl-5-(2-phosphoethyl)-thiazole from 5-(2-hydroxyethyl)-4-methylthiazole: step 1/1. Its function is as follows. Catalyzes the phosphorylation of the hydroxyl group of 4-methyl-5-beta-hydroxyethylthiazole (THZ). This chain is Hydroxyethylthiazole kinase, found in Cutibacterium acnes (strain DSM 16379 / KPA171202) (Propionibacterium acnes).